A 488-amino-acid polypeptide reads, in one-letter code: Cytochrome P450 monooxygenase orf2 (488 aa).

The chain crosses the membrane as a helical span at residues Leu-7–Val-27. Cys-432 lines the heme pocket.

The protein belongs to the cytochrome P450 family. Requires heme as cofactor.

The protein localises to the membrane. It functions in the pathway secondary metabolite biosynthesis. Its function is as follows. Cytochrome P450 monooxygenase; part of the gene cluster that mediates the biosynthesis of nigerpyrone and its derivatives carbonarone A and pestalamide A. The biosynthesis pathway begins with the polyketide assembly by epaA to form phenylacetyl triketide precursor from successive condensation of two malonyl-CoA, presumably with one phenylacetyl-CoA starter unit produced by the phenylacetyl-CoA ligase epaB. For the nigerpyrone biosynthesis, the reactive polyketide chain is released as an aldehyde through the R-domain. A nonenzymatic cyclization and dehydration may create nigerpyrone. For the biosynthesis of carbonarone A and pestalamide A, an extra methyl group is added through the C-methyltransferase domain. Several further steps involving the dehydrogenase orf1, the cytochrome P450 monooxygenase orf2 and the FAD-dependent monooxygenase orf3 are required to form a carbonarone A precursor which is converted to carbonarone A via cyclization. The O-acetyltransferase epaC could catalyze the transfer of 2-methylsuccinyl-CoA, a common intermediate in the ethylmalonyl-CoA pathway, to generate the final product pestalamide A. The chain is Cytochrome P450 monooxygenase orf2 from Aspergillus niger (strain ATCC MYA-4892 / CBS 513.88 / FGSC A1513).